Consider the following 463-residue polypeptide: Type IV secretion system protein PtlD homolog (463 aa).

Residues 1–24 (MAGLSRILLSCTLACLLAGQAAQA) form the signal peptide. 5 helical membrane passes run 118–138 (LQPLVYSMMTLLVLLTGYALL), 232–252 (WLLCAMIVATSAGGWLCLAAS), 253–273 (LLIVPGLIVTLLLSLGPLFLV), 294–314 (ALVFMALGTPAVGLLSDVLAG), and 333–353 (MLAATLCATATLMLLTLVPLA). The segment covering 376-410 (AHRQAAARQYAPRPAAAAAAAGPHQAGTYAASATP) has biased composition (low complexity). Residues 376–463 (AHRQAAARQY…RVLPRKPNLP (88 aa)) are disordered. The segment covering 411 to 420 (APAPARPAPS) has biased composition (pro residues). Over residues 441-455 (VRRDDRPAPAPDRRV) the composition is skewed to basic and acidic residues.

The protein resides in the cell membrane. The sequence is that of Type IV secretion system protein PtlD homolog (ptlD) from Bordetella parapertussis (strain 12822 / ATCC BAA-587 / NCTC 13253).